Consider the following 258-residue polypeptide: Deoxyribose-phosphate aldolase (258 aa).

The active-site Proton donor/acceptor is Asp101. Residue Lys166 is the Schiff-base intermediate with acetaldehyde of the active site. Lys200 acts as the Proton donor/acceptor in catalysis.

The protein belongs to the DeoC/FbaB aldolase family. DeoC type 2 subfamily.

Its subcellular location is the cytoplasm. The enzyme catalyses 2-deoxy-D-ribose 5-phosphate = D-glyceraldehyde 3-phosphate + acetaldehyde. The protein operates within carbohydrate degradation; 2-deoxy-D-ribose 1-phosphate degradation; D-glyceraldehyde 3-phosphate and acetaldehyde from 2-deoxy-alpha-D-ribose 1-phosphate: step 2/2. Catalyzes a reversible aldol reaction between acetaldehyde and D-glyceraldehyde 3-phosphate to generate 2-deoxy-D-ribose 5-phosphate. This is Deoxyribose-phosphate aldolase from Actinobacillus pleuropneumoniae serotype 5b (strain L20).